The sequence spans 99 residues: DNA-binding protein HU (99 aa).

A disordered region spans residues 67–86 (REGRNPKTGAKMKIDAYNQP).

Belongs to the bacterial histone-like protein family. Homodimer.

Its function is as follows. Histone-like DNA-binding protein which is capable of wrapping DNA to stabilize it, and thus to prevent its denaturation under extreme environmental conditions. The sequence is that of DNA-binding protein HU (hup) from Rickettsia conorii (strain ATCC VR-613 / Malish 7).